A 463-amino-acid chain; its full sequence is Glutamyl-tRNA reductase (463 aa).

Substrate contacts are provided by residues 49-52, serine 109, 114-116, and glutamine 120; these read TCNR and EQQ. Residue cysteine 50 is the Nucleophile of the active site. 196 to 201 serves as a coordination point for NADP(+); it reads GAGAMS.

It belongs to the glutamyl-tRNA reductase family. As to quaternary structure, homodimer.

It catalyses the reaction (S)-4-amino-5-oxopentanoate + tRNA(Glu) + NADP(+) = L-glutamyl-tRNA(Glu) + NADPH + H(+). It participates in porphyrin-containing compound metabolism; protoporphyrin-IX biosynthesis; 5-aminolevulinate from L-glutamyl-tRNA(Glu): step 1/2. Functionally, catalyzes the NADPH-dependent reduction of glutamyl-tRNA(Glu) to glutamate 1-semialdehyde (GSA). This Corynebacterium glutamicum (strain ATCC 13032 / DSM 20300 / JCM 1318 / BCRC 11384 / CCUG 27702 / LMG 3730 / NBRC 12168 / NCIMB 10025 / NRRL B-2784 / 534) protein is Glutamyl-tRNA reductase.